The sequence spans 1017 residues: GPI ethanolamine phosphate transferase 3 (1017 aa).

A helical membrane pass occupies residues 34-54 (FYIILLVFIAILQFISIAFFT). N66, N71, N100, N182, and N203 each carry an N-linked (GlcNAc...) asparagine glycan. A helical transmembrane segment spans residues 347–367 (VSSLALLMGQPIPFNNLGWPI). A glycan (N-linked (GlcNAc...) asparagine) is linked at N411. Helical transmembrane passes span 457–477 (LLATSLVLLISITKLIPSIVV), 484–504 (FVPGIIIMVLVTNLCFHGIFY), 515–535 (FWGTLLATAIGIIIGCYITIF), 558–578 (IAVMFMIIHALLFTSNSFTIW), 582–602 (IVAFLLSTFGMLTLYEFVFLP), and 644–664 (LGGYHSAVLIIFTRLASMITI). Residues N681 and N682 are each glycosylated (N-linked (GlcNAc...) asparagine). A helical membrane pass occupies residues 685–705 (WWVLGLCFLMIFILPACITGY). Residue N707 is glycosylated (N-linked (GlcNAc...) asparagine). A helical transmembrane segment spans residues 715–735 (AAPIWINVFLKGILGLNFVYW). N-linked (GlcNAc...) asparagine glycosylation is present at N742. Helical transmembrane passes span 765–785 (IIAGFSLIASNVGWLMGPLCI), 806–826 (NIYGSEFFLLVINVLISILLF), 829–849 (PLAQLSYFLMCNQLLSILEII), 903–923 (IAIILNTFGPHILVSLSVALL), 947–967 (GILLTYNTILCLSSFIWVTHF), and 981–1001 (FIFASLSLIVTQLVVTFGTIA).

The protein belongs to the PIGG/PIGN/PIGO family. PIGO subfamily. Post-translationally, glycosylated.

It is found in the endoplasmic reticulum membrane. It participates in glycolipid biosynthesis; glycosylphosphatidylinositol-anchor biosynthesis. Involved in glycosylphosphatidylinositol-anchor biosynthesis. Transfers ethanolamine phosphate to the GPI third mannose which links the GPI-anchor to the C-terminus of the proteins by an amide bond. Involved in cell wall biosynthesis. This is GPI ethanolamine phosphate transferase 3 (GPI13) from Saccharomyces cerevisiae (strain ATCC 204508 / S288c) (Baker's yeast).